The sequence spans 398 residues: Cathepsin E (398 aa).

Positions 1-21 are cleaved as a signal peptide; the sequence is MKPLFVLLLLLLLLDLAQAQG. Positions 22-58 are cleaved as a propeptide — activation peptide; that stretch reads VLHRVPLRRHQSLRKKLRAQGQLSDFWRSHNLDMIEF. Positions 80-394 constitute a Peptidase A1 domain; it reads YFGTVSIGSP…DRGNNQVGLA (315 aa). An N-linked (GlcNAc...) asparagine glycan is attached at Asn92. The active site involves Asp98. 2 cysteine pairs are disulfide-bonded: Cys111-Cys116 and Cys274-Cys278. Residue Asp283 is part of the active site.

The protein belongs to the peptidase A1 family. As to quaternary structure, homodimer; disulfide-linked. Glycosylated. The nature of the carbohydrate chain varies between cell types. In brain microglia, the proenzyme contains a high mannose-type oligosaccharide, while the mature enzyme contains a complex-type oligosaccharide. In stomach and spleen, the mature enzyme contains a high mannose-type oligosaccharide. In erythrocyte membranes, the mature enzyme contains a complex-type oligosaccharide. As to expression, expressed abundantly in lymphocytes and macrophages of the thymus and spleen, and in the M cells of the intestine. In the brain, expression is limited to reactive microglial cells, the large pyrimidial neurons in the cerebral cortex, the CA1 and CA3 pyrimidial neurons of the hippocampus, the large neurons of the neostriatum, and the Purkinje neurons of the cerebellum.

It is found in the endosome. It catalyses the reaction Similar to cathepsin D, but slightly broader specificity.. May have a role in immune function. Probably involved in the processing of antigenic peptides during MHC class II-mediated antigen presentation. May play a role in activation-induced lymphocyte depletion in the thymus, and in neuronal degeneration and glial cell activation in the brain. The polypeptide is Cathepsin E (Ctse) (Rattus norvegicus (Rat)).